Consider the following 271-residue polypeptide: Cobalt import ATP-binding protein CbiO (271 aa).

Positions 2–236 (LATSDLWFRY…TEAMEHAGLT (235 aa)) constitute an ABC transporter domain. Position 34–41 (34–41 (GANGCGKS)) interacts with ATP.

This sequence belongs to the ABC transporter superfamily. Cobalt importer (TC 3.A.1.18.1) family. As to quaternary structure, forms an energy-coupling factor (ECF) transporter complex composed of an ATP-binding protein (A component, CbiO), a transmembrane protein (T component, CbiQ) and 2 possible substrate-capture proteins (S components, CbiM and CbiN) of unknown stoichimetry.

Its subcellular location is the cell inner membrane. The protein operates within cofactor biosynthesis; adenosylcobalamin biosynthesis. Its function is as follows. Part of the energy-coupling factor (ECF) transporter complex CbiMNOQ involved in cobalt import. Presumably responsible for energy coupling to the transport system. The polypeptide is Cobalt import ATP-binding protein CbiO (Salmonella typhi).